The primary structure comprises 375 residues: Trichodiene synthase (375 aa).

It belongs to the trichodiene synthase family.

The enzyme catalyses (2E,6E)-farnesyl diphosphate = trichodiene + diphosphate. It participates in sesquiterpene biosynthesis; trichothecene biosynthesis. TS is a member of the terpene cyclase group of enzymes. It catalyzes the isomerization and cyclization of farnesyl pyro-phosphate to form trichodiene, the first cyclic intermediate in the biosynthetic pathway for trichothecenes. It serves to branch trichothecene biosynthesis from the isoprenoid pathway. This is Trichodiene synthase (TRI5) from Fusarium boothii.